We begin with the raw amino-acid sequence, 320 residues long: tRNA N6-adenosine threonylcarbamoyltransferase (320 aa).

Fe cation-binding residues include histidine 114 and histidine 118. Residues 136-140 (VVSGG), aspartate 169, glycine 182, aspartate 186, and asparagine 273 each bind substrate. Aspartate 297 provides a ligand contact to Fe cation.

The protein belongs to the KAE1 / TsaD family. Fe(2+) serves as cofactor.

Its subcellular location is the cytoplasm. It catalyses the reaction L-threonylcarbamoyladenylate + adenosine(37) in tRNA = N(6)-L-threonylcarbamoyladenosine(37) in tRNA + AMP + H(+). In terms of biological role, required for the formation of a threonylcarbamoyl group on adenosine at position 37 (t(6)A37) in tRNAs that read codons beginning with adenine. Is involved in the transfer of the threonylcarbamoyl moiety of threonylcarbamoyl-AMP (TC-AMP) to the N6 group of A37, together with TsaE and TsaB. TsaD likely plays a direct catalytic role in this reaction. The polypeptide is tRNA N6-adenosine threonylcarbamoyltransferase (Ureaplasma parvum serovar 3 (strain ATCC 27815 / 27 / NCTC 11736)).